The primary structure comprises 483 residues: MRILFASSEVHPLIKTGGLADVSASLPQALKRLRQDVRVVMPAYGSVLDKAGDLEQVTTLQLPGFPGDTVTLLSGTLPGSRVPLWLVDAPRLFRRAGDPYRAPDGHDWQDNYLRFGLFARLIEHLALDRAGLDWRPDVVHCNDWQAGLAPLMLSMHESRPATVFTIHNLAYQGLFPRHAFDALNLPPQLWHYQGLEFHGKLSFIKGGIGFADHITTVSPSYAREILTPQQGFGLDGLLNHRAGVLTGILNGVDYREWDPGKDRHLVARYSADDLSGKARCKAALQHHFKLPCHSGIPLLGHVGRMVAQKGVDLLLKAAEPLLAAGEAQLVVVGSGDATLEQTARSLAERYPEHMGLHIGYSEPLAHQLEAGADIFVMPSRFEPCGLNQMYSLRYGTVPVVRNTGGLADTVVDADPAHLAARDATGIQFDEATPQALADALARALALYHDPACWKRLMQAGMAQDFSWGRSAEAYLDLYKDLVS.

K15 contributes to the ADP-alpha-D-glucose binding site.

This sequence belongs to the glycosyltransferase 1 family. Bacterial/plant glycogen synthase subfamily.

The enzyme catalyses [(1-&gt;4)-alpha-D-glucosyl](n) + ADP-alpha-D-glucose = [(1-&gt;4)-alpha-D-glucosyl](n+1) + ADP + H(+). The protein operates within glycan biosynthesis; glycogen biosynthesis. Synthesizes alpha-1,4-glucan chains using ADP-glucose. The protein is Glycogen synthase of Thioalkalivibrio sulfidiphilus (strain HL-EbGR7).